The following is a 313-amino-acid chain: tRNA uridine(34) hydroxylase (313 aa).

A Rhodanese domain is found at 127 to 225 (SDPDTILIDT…YLETVPEEES (99 aa)). Cys185 (cysteine persulfide intermediate) is an active-site residue.

It belongs to the TrhO family.

The enzyme catalyses uridine(34) in tRNA + AH2 + O2 = 5-hydroxyuridine(34) in tRNA + A + H2O. Its function is as follows. Catalyzes oxygen-dependent 5-hydroxyuridine (ho5U) modification at position 34 in tRNAs. The sequence is that of tRNA uridine(34) hydroxylase from Gluconobacter oxydans (strain 621H) (Gluconobacter suboxydans).